The following is a 416-amino-acid chain: Serine hydroxymethyltransferase (416 aa).

(6S)-5,6,7,8-tetrahydrofolate-binding positions include L121 and 125–127 (GHL). K230 is modified (N6-(pyridoxal phosphate)lysine).

This sequence belongs to the SHMT family. Homodimer. It depends on pyridoxal 5'-phosphate as a cofactor.

It localises to the cytoplasm. The enzyme catalyses (6R)-5,10-methylene-5,6,7,8-tetrahydrofolate + glycine + H2O = (6S)-5,6,7,8-tetrahydrofolate + L-serine. Its pathway is one-carbon metabolism; tetrahydrofolate interconversion. It participates in amino-acid biosynthesis; glycine biosynthesis; glycine from L-serine: step 1/1. Functionally, catalyzes the reversible interconversion of serine and glycine with tetrahydrofolate (THF) serving as the one-carbon carrier. This reaction serves as the major source of one-carbon groups required for the biosynthesis of purines, thymidylate, methionine, and other important biomolecules. Also exhibits THF-independent aldolase activity toward beta-hydroxyamino acids, producing glycine and aldehydes, via a retro-aldol mechanism. The polypeptide is Serine hydroxymethyltransferase (Nitrosomonas eutropha (strain DSM 101675 / C91 / Nm57)).